Here is a 442-residue protein sequence, read N- to C-terminus: Exodeoxyribonuclease 7 large subunit (442 aa).

The segment at 1–38 (MSDSTQFSLFDSGDDEPAKVTAPKRKVARKKRSSSSSD) is disordered. The span at 22–33 (APKRKVARKKRS) shows a compositional bias: basic residues.

This sequence belongs to the XseA family. As to quaternary structure, heterooligomer composed of large and small subunits.

Its subcellular location is the cytoplasm. The catalysed reaction is Exonucleolytic cleavage in either 5'- to 3'- or 3'- to 5'-direction to yield nucleoside 5'-phosphates.. Functionally, bidirectionally degrades single-stranded DNA into large acid-insoluble oligonucleotides, which are then degraded further into small acid-soluble oligonucleotides. This is Exodeoxyribonuclease 7 large subunit from Rhodopirellula baltica (strain DSM 10527 / NCIMB 13988 / SH1).